The primary structure comprises 102 residues: Small ribosomal subunit protein uS10 (102 aa).

This sequence belongs to the universal ribosomal protein uS10 family. In terms of assembly, part of the 30S ribosomal subunit.

In terms of biological role, involved in the binding of tRNA to the ribosomes. This Halalkalibacterium halodurans (strain ATCC BAA-125 / DSM 18197 / FERM 7344 / JCM 9153 / C-125) (Bacillus halodurans) protein is Small ribosomal subunit protein uS10.